Consider the following 1217-residue polypeptide: DNA-directed RNA polymerase subunit beta' (1217 aa).

Zn(2+) contacts are provided by C60, C62, C75, and C78. Mg(2+) contacts are provided by D449, D451, and D453. Positions 821, 895, 902, and 905 each coordinate Zn(2+).

Belongs to the RNA polymerase beta' chain family. The RNAP catalytic core consists of 2 alpha, 1 beta, 1 beta' and 1 omega subunit. When a sigma factor is associated with the core the holoenzyme is formed, which can initiate transcription. The cofactor is Mg(2+). It depends on Zn(2+) as a cofactor.

The enzyme catalyses RNA(n) + a ribonucleoside 5'-triphosphate = RNA(n+1) + diphosphate. Functionally, DNA-dependent RNA polymerase catalyzes the transcription of DNA into RNA using the four ribonucleoside triphosphates as substrates. This chain is DNA-directed RNA polymerase subunit beta', found in Lactobacillus helveticus (strain DPC 4571).